Here is a 162-residue protein sequence, read N- to C-terminus: Lectin BRA-3 (162 aa).

A signal peptide spans 1–24 (MQRSEIVQAVTLLVVVFAITTAEC). A C-type lectin domain is found at 25-152 (TCPGNLDWQE…NKNKNFLCKM (128 aa)). 3 disulfides stabilise this stretch: cysteine 26–cysteine 39, cysteine 56–cysteine 150, and cysteine 125–cysteine 142.

In terms of assembly, homotetramer; disulfide-linked. Coelemic fluid.

Functionally, sugar-binding protein which recognizes specific carbohydrate structures and agglutinates a variety of animal cells by binding to cell-surface glycoproteins and glycolipids. Calcium-dependent lectin. Invertebrate lectins may be involved in defense functions. This chain is Lectin BRA-3, found in Megabalanus rosa (Acorn barnacle).